Reading from the N-terminus, the 196-residue chain is Small ribosomal subunit protein uS4c (196 aa).

The segment at 15 to 42 is disordered; the sequence is LGALPGLTRKTPKSGSNQKKKFNSGKKE. Positions 89–150 constitute an S4 RNA-binding domain; that stretch reads MRLDNILFRL…NQRSKRLVQN (62 aa).

The protein belongs to the universal ribosomal protein uS4 family. As to quaternary structure, part of the 30S ribosomal subunit. Contacts protein S5. The interaction surface between S4 and S5 is involved in control of translational fidelity.

The protein resides in the plastid. Its subcellular location is the chloroplast. One of the primary rRNA binding proteins, it binds directly to 16S rRNA where it nucleates assembly of the body of the 30S subunit. Functionally, with S5 and S12 plays an important role in translational accuracy. The polypeptide is Small ribosomal subunit protein uS4c (rps4) (Cenchrus longisetus (Feathertop)).